Consider the following 69-residue polypeptide: Defensin-like protein 166 (69 aa).

An N-terminal signal peptide occupies residues 1–15; that stretch reads MIIVIIFLVIYFNNQ. Cystine bridges form between Cys19–Cys68, Cys24–Cys44, Cys29–Cys62, and Cys33–Cys64.

It belongs to the DEFL family.

Its subcellular location is the secreted. The sequence is that of Defensin-like protein 166 from Arabidopsis thaliana (Mouse-ear cress).